Reading from the N-terminus, the 121-residue chain is Acidic phospholipase A2 SpII RP4 (121 aa).

7 cysteine pairs are disulfide-bonded: Cys-25-Cys-114, Cys-27-Cys-43, Cys-42-Cys-94, Cys-48-Cys-121, Cys-49-Cys-87, Cys-56-Cys-80, and Cys-74-Cys-85. Positions 26, 28, and 30 each coordinate Ca(2+). His-46 is a catalytic residue. Asp-47 contacts Ca(2+). The active site involves Asp-88.

Requires Ca(2+) as cofactor. In terms of tissue distribution, expressed by the venom gland.

It localises to the secreted. The enzyme catalyses a 1,2-diacyl-sn-glycero-3-phosphocholine + H2O = a 1-acyl-sn-glycero-3-phosphocholine + a fatty acid + H(+). Snake venom phospholipase A2 (PLA2) which exhibits indirect hemolysis, induces mild edema inflammation in the foot pads of mice and slightly delays anticoagulant activities. In mice, not lethal, even at the highest dose, and exhibits low to moderate myotoxicity on muscular fibers. PLA2 catalyzes the calcium-dependent hydrolysis of the 2-acyl groups in 3-sn-phosphoglycerides. The protein is Acidic phospholipase A2 SpII RP4 of Bothrops alternatus (Urutu).